The chain runs to 165 residues: Chorismate pyruvate-lyase (165 aa).

Residues Met35, Arg77, Leu115, and Glu156 each contribute to the substrate site.

It belongs to the UbiC family. As to quaternary structure, monomer.

It localises to the cytoplasm. It carries out the reaction chorismate = 4-hydroxybenzoate + pyruvate. The protein operates within cofactor biosynthesis; ubiquinone biosynthesis. In terms of biological role, removes the pyruvyl group from chorismate, with concomitant aromatization of the ring, to provide 4-hydroxybenzoate (4HB) for the ubiquinone pathway. This chain is Chorismate pyruvate-lyase, found in Escherichia coli O17:K52:H18 (strain UMN026 / ExPEC).